A 505-amino-acid polypeptide reads, in one-letter code: Actin nucleation-promoting factor WASL (505 aa).

At S2 the chain carries N-acetylserine. One can recognise a WH1 domain in the interval 34–141; it reads LGKKCVTMSS…KAVTDLLGRR (108 aa). Disordered regions lie at residues 138 to 163 and 184 to 205; these read LGRR…ATVD and HTKE…DIGT. Residues 186–198 show a composition bias toward basic residues; it reads KEKKKGKAKKKRL. A CRIB domain is found at 203–216; it reads IGTPSNFQHIGHVG. At S242 the chain carries Phosphoserine; by TNK2. Phosphotyrosine; by FAK1 and TNK2 is present on Y256. Positions 266–406 are disordered; that stretch reads EAVKNELRRQ…HQVPTTAGNK (141 aa). Composition is skewed to pro residues over residues 276-364 and 371-391; these read APPP…PPPS and VAPP…PPGL. R307 carries the post-translational modification Omega-N-methylarginine. WH2 domains lie at 405–422 and 433–450; these read NKAA…LKKV and GRDA…LKSV. The tract at residues 476–505 is disordered; sequence QKRSKAIHSSDEDEDEDDEEDFEDDDEWED. Phosphoserine occurs at positions 484 and 485. The segment covering 486–505 has biased composition (acidic residues); the sequence is DEDEDEDDEEDFEDDDEWED.

As to quaternary structure, binds actin and the Arp2/3 complex. Interacts with CDC42. Interacts with FCHSD1. Interacts with FCHSD2. Binds to SH3 domains of GRB2. Interacts with the C-terminal SH3 domain of DNMBP. Interacts with SNX9. Interacts with the WW domains of PRPF40A/FBP11. Interacts with PTK2/FAK1. Interacts with PACSIN1, PACSIN2 and PACSIN3. Interacts with NOSTRIN. Binds to TNK2. Interacts with SNX33. Interacts with NONO (via second RRM domain); the interaction is direct. Component of a multiprotein complex with NONO and SFPQ; associates with the complex via direct interaction with NONO. In terms of assembly, (Microbial infection) Interacts with E.coli effector protein EspF(U). Identified in a complex containing at least WASL, BAIAP2L1 and E.coli EspF(U). (Microbial infection) Interacts with Shigella flexneri protein IcsA. The interaction with IcsA enhances the affinity of WASL for Arp2/3, thus assembling a tight complex which has maximal activity in actin assembly. Phosphorylation at Ser-242, Tyr-256, Ser-484 and Ser-485 enhances actin polymerization activity.

The protein localises to the cytoplasm. The protein resides in the cytoskeleton. It localises to the nucleus. Functionally, regulates actin polymerization by stimulating the actin-nucleating activity of the Arp2/3 complex. Involved in various processes, such as mitosis and cytokinesis, via its role in the regulation of actin polymerization. Together with CDC42, involved in the extension and maintenance of the formation of thin, actin-rich surface projections called filopodia. In addition to its role in the cytoplasm, also plays a role in the nucleus by regulating gene transcription, probably by promoting nuclear actin polymerization. Binds to HSF1/HSTF1 and forms a complex on heat shock promoter elements (HSE) that negatively regulates HSP90 expression. Plays a role in dendrite spine morphogenesis. Decreasing levels of DNMBP (using antisense RNA) alters apical junction morphology in cultured enterocytes, junctions curve instead of being nearly linear. The polypeptide is Actin nucleation-promoting factor WASL (WASL) (Homo sapiens (Human)).